We begin with the raw amino-acid sequence, 244 residues long: Leucyl/phenylalanyl-tRNA--protein transferase (244 aa).

The segment at 1-22 is disordered; it reads MHSQPYLLSPAPNNTPFPPAEH.

This sequence belongs to the L/F-transferase family.

Its subcellular location is the cytoplasm. It catalyses the reaction N-terminal L-lysyl-[protein] + L-leucyl-tRNA(Leu) = N-terminal L-leucyl-L-lysyl-[protein] + tRNA(Leu) + H(+). The enzyme catalyses N-terminal L-arginyl-[protein] + L-leucyl-tRNA(Leu) = N-terminal L-leucyl-L-arginyl-[protein] + tRNA(Leu) + H(+). It carries out the reaction L-phenylalanyl-tRNA(Phe) + an N-terminal L-alpha-aminoacyl-[protein] = an N-terminal L-phenylalanyl-L-alpha-aminoacyl-[protein] + tRNA(Phe). Its function is as follows. Functions in the N-end rule pathway of protein degradation where it conjugates Leu, Phe and, less efficiently, Met from aminoacyl-tRNAs to the N-termini of proteins containing an N-terminal arginine or lysine. This Xylella fastidiosa (strain M12) protein is Leucyl/phenylalanyl-tRNA--protein transferase.